The chain runs to 506 residues: Maturase K (506 aa).

Belongs to the intron maturase 2 family. MatK subfamily.

The protein localises to the plastid. It localises to the chloroplast. Functionally, usually encoded in the trnK tRNA gene intron. Probably assists in splicing its own and other chloroplast group II introns. This Carica papaya (Papaya) protein is Maturase K.